The sequence spans 463 residues: tRNA modification GTPase MnmE (463 aa).

Residues Arg-26, Glu-88, and Arg-127 each coordinate (6S)-5-formyl-5,6,7,8-tetrahydrofolate. The 160-residue stretch at 224–383 folds into the TrmE-type G domain; that stretch reads GLATAIIGRP…LEQRIAKMFF (160 aa). K(+) is bound at residue Asn-234. Residues 234–239, 253–259, and 278–281 each bind GTP; these read NVGKSS, TDVAGTT, and DTAG. Ser-238 is a Mg(2+) binding site. Residues Thr-253, Val-255, and Thr-258 each contribute to the K(+) site. Thr-259 serves as a coordination point for Mg(2+). Residue Lys-463 coordinates (6S)-5-formyl-5,6,7,8-tetrahydrofolate.

It belongs to the TRAFAC class TrmE-Era-EngA-EngB-Septin-like GTPase superfamily. TrmE GTPase family. Homodimer. Heterotetramer of two MnmE and two MnmG subunits. The cofactor is K(+).

It localises to the cytoplasm. Its function is as follows. Exhibits a very high intrinsic GTPase hydrolysis rate. Involved in the addition of a carboxymethylaminomethyl (cmnm) group at the wobble position (U34) of certain tRNAs, forming tRNA-cmnm(5)s(2)U34. The polypeptide is tRNA modification GTPase MnmE (Lactiplantibacillus plantarum (strain ATCC BAA-793 / NCIMB 8826 / WCFS1) (Lactobacillus plantarum)).